We begin with the raw amino-acid sequence, 134 residues long: Holo-[acyl-carrier-protein] synthase (134 aa).

Mg(2+) is bound by residues D8 and E57.

The protein belongs to the P-Pant transferase superfamily. AcpS family. The cofactor is Mg(2+).

The protein localises to the cytoplasm. The enzyme catalyses apo-[ACP] + CoA = holo-[ACP] + adenosine 3',5'-bisphosphate + H(+). Its function is as follows. Transfers the 4'-phosphopantetheine moiety from coenzyme A to a Ser of acyl-carrier-protein. The protein is Holo-[acyl-carrier-protein] synthase of Rhizobium johnstonii (strain DSM 114642 / LMG 32736 / 3841) (Rhizobium leguminosarum bv. viciae).